The sequence spans 306 residues: High osmolarity signaling protein MOS1 (306 aa).

The Cytoplasmic portion of the chain corresponds to 1 to 23 (MEHSRPYGGRKRMSLGNILGDPF). A helical membrane pass occupies residues 24 to 44 (ALATISISLLAWFITFISCVI). Topologically, residues 45–67 (AQVQANKNKGLPDKDNPDGNFPP) are extracellular. The helical transmembrane segment at 68 to 88 (FAWWAVVYSLFLIVGVVIVVA) threads the bilayer. The Cytoplasmic segment spans residues 89 to 96 (SDAIQTYH). The helical transmembrane segment at 97-117 (VAVTGYLAGGMVLVTSGVNSL) threads the bilayer. At 118–126 (VYSKNGARE) the chain is on the extracellular side. Residues 127–147 (AAAAGFILLSMVVIVWIFYFG) traverse the membrane as a helical segment. Residues 148–306 (STPSSTPRAF…IAPSNYLILL (159 aa)) lie on the Cytoplasmic side of the membrane. A disordered region spans residues 204 to 242 (FENPSPVGGASQAPTAPTMPTYGNNTMQPNNKSNDEEVL). A compositionally biased stretch (polar residues) spans 224–235 (TYGNNTMQPNNK). One can recognise an SH3 domain in the interval 246–306 (DYPYQAKAIY…IAPSNYLILL (61 aa)).

This sequence belongs to the SHO1 family. In terms of assembly, forms homooligomers.

It is found in the cell membrane. Its function is as follows. Plasma membrane osmosensor that activates the high osmolarity glycerol (HOG) MAPK signaling pathway in response to high osmolarity. Affects fungal virulence. The chain is High osmolarity signaling protein MOS1 (MOS1) from Metarhizium robertsii (strain ARSEF 23 / ATCC MYA-3075) (Metarhizium anisopliae (strain ARSEF 23)).